Consider the following 344-residue polypeptide: Ferrochelatase (344 aa).

His-214 and Glu-295 together coordinate Fe cation.

Belongs to the ferrochelatase family.

The protein localises to the cytoplasm. The enzyme catalyses heme b + 2 H(+) = protoporphyrin IX + Fe(2+). The protein operates within porphyrin-containing compound metabolism; protoheme biosynthesis; protoheme from protoporphyrin-IX: step 1/1. In terms of biological role, catalyzes the ferrous insertion into protoporphyrin IX. The chain is Ferrochelatase from Rhizobium etli (strain CIAT 652).